The following is a 438-amino-acid chain: UDP-N-acetyl-D-mannosamine dehydrogenase (438 aa).

NAD(+) is bound by residues tyrosine 21, isoleucine 22, aspartate 41, arginine 46, threonine 93, and threonine 131. 8 residues coordinate UDP-N-acetyl-alpha-D-mannosaminouronate: arginine 160, valine 161, lysine 212, asparagine 216, arginine 219, histidine 250, arginine 252, and glycine 263. The active-site Proton donor/acceptor is lysine 212. The active-site Nucleophile is cysteine 266. The UDP-N-acetyl-alpha-D-mannosaminouronate site is built by tyrosine 323 and lysine 324. Arginine 331 is an NAD(+) binding site. Position 409 (lysine 409) interacts with UDP-N-acetyl-alpha-D-mannosaminouronate.

The protein belongs to the UDP-glucose/GDP-mannose dehydrogenase family. Homotetramer; probably dimer of dimers.

The enzyme catalyses UDP-N-acetyl-alpha-D-mannosamine + 2 NAD(+) + H2O = UDP-N-acetyl-alpha-D-mannosaminouronate + 2 NADH + 3 H(+). Functionally, catalyzes the four-electron oxidation of UDP-N-acetyl-D-mannosamine (UDP-ManNAc), reducing NAD(+) and releasing UDP-N-acetylmannosaminuronic acid (UDP-ManNAcA). The protein is UDP-N-acetyl-D-mannosamine dehydrogenase (wecC) of Methanococcus aeolicus (strain ATCC BAA-1280 / DSM 17508 / OCM 812 / Nankai-3).